The sequence spans 541 residues: Peptidyl-alpha-hydroxyglycine alpha-amidating lyase 1 (541 aa).

The signal sequence occupies residues 1–33; the sequence is MKSTDSAKCLGSKSLAICCLLLHLLLCIRPAVS. The Extracellular portion of the chain corresponds to 34-458; the sequence is QTQSPQRYLH…VAVHHPSGKA (425 aa). The N-linked (GlcNAc...) asparagine glycan is linked to N92. NHL repeat units lie at residues 164–205, 215–258, and 272–314; these read GKVQ…FPPR, LGDA…YSRK, and GISY…FLSS. 2 cysteine pairs are disulfide-bonded: C228/C248 and C299/C310. An N-linked (GlcNAc...) asparagine glycan is attached at N315. Residues 374 to 418 form an NHL 4 repeat; that stretch reads KQLVSKFGPNNLQFQNPHDVAVTADGNEIYVAELNPMRIHKFVHR. A helical membrane pass occupies residues 459-479; sequence ILVASLMLLFAGSTFALALIF. The Cytoplasmic segment spans residues 480 to 541; sequence ARRRKRGCLP…TKTLASAQYA (62 aa). The disordered stretch occupies residues 521-541; sequence LDQQASDEEQETKTLASAQYA.

This sequence belongs to the peptidyl-alpha-hydroxyglycine alpha-amidating lyase family. Requires Zn(2+) as cofactor. Post-translationally, N-glycosylated. As to expression, widely expressed. In mature larvae, it is ubiquitously expressed with a low expression in all cells and a stronger expression in a subset of neurons. Colocalizes with neuropeptide proctolin. In adults, weak expression is observed in most neuronal cell bodies and in scattered large cells throughout the protocerebrum and also in the subesophageal neuromeres (at protein level).

The protein localises to the cell membrane. The enzyme catalyses a [peptide]-C-terminal (2S)-2-hydroxyglycine = a [peptide]-C-terminal amide + glyoxylate. Its function is as follows. Peptidyl-alpha-hydroxylglycine alpha-amidating lyase that catalyzes an essential reaction in C-terminal alpha-amidation of peptides. Mediates the dismutation of the unstable peptidyl(2-hydroxyglycine) intermediate to glyoxylate and the corresponding desglycine peptide amide. C-terminal amidation of peptides such as neuropeptides is essential for full biological activity. The sequence is that of Peptidyl-alpha-hydroxyglycine alpha-amidating lyase 1 (Pal1) from Drosophila melanogaster (Fruit fly).